We begin with the raw amino-acid sequence, 90 residues long: Acylphosphatase (90 aa).

Residues 5-90 enclose the Acylphosphatase-like domain; that stretch reads CVKASVKGIV…WRHIDGFEIK (86 aa). Residues arginine 20 and asparagine 38 contribute to the active site.

This sequence belongs to the acylphosphatase family.

It carries out the reaction an acyl phosphate + H2O = a carboxylate + phosphate + H(+). The protein is Acylphosphatase (acyP) of Photobacterium profundum (strain SS9).